The primary structure comprises 333 residues: Ribosomal RNA small subunit methyltransferase H (333 aa).

S-adenosyl-L-methionine is bound by residues 34–36 (GGH), Asp-59, Phe-86, Asp-112, and Gln-119.

Belongs to the methyltransferase superfamily. RsmH family.

It localises to the cytoplasm. It carries out the reaction cytidine(1402) in 16S rRNA + S-adenosyl-L-methionine = N(4)-methylcytidine(1402) in 16S rRNA + S-adenosyl-L-homocysteine + H(+). Functionally, specifically methylates the N4 position of cytidine in position 1402 (C1402) of 16S rRNA. The chain is Ribosomal RNA small subunit methyltransferase H from Prosthecochloris aestuarii (strain DSM 271 / SK 413).